Consider the following 217-residue polypeptide: LSM12 homolog A (217 aa).

The Sm domain occupies 9-78; the sequence is VNAVNDCFSI…CSNVQVIKEC (70 aa). The AD domain maps to 86–184; that stretch reads QKLNLEQVKM…IIKQFFNTRP (99 aa). The interval 185 to 217 is disordered; sequence SPVPESGAAASTSSPSVSPTSSSLASGSPVPAN. A compositionally biased stretch (low complexity) spans 190–217; it reads SGAAASTSSPSVSPTSSSLASGSPVPAN.

This sequence belongs to the LSM12 family. In terms of assembly, component of the Atx2-tyf activator complex, composed of Atx2, tyf, pAbp, Lsm12a. Interacts with tyf, Atx2 and pAbp.

In terms of biological role, component of the Atx2-tyf activator complex which functions in the circadian pacemaker neurons to activate the TYF-dependent translation of per and maintain 24 hour periodicity in circadian behaviors. Within the Atx2-tyf complex, likely to function as a molecular adapter which stabilizes the interaction between Atx2 and the translational regulator tyf. This Drosophila melanogaster (Fruit fly) protein is LSM12 homolog A.